The sequence spans 79 residues: D-alanyl carrier protein (79 aa).

The 77-residue stretch at 1–77 folds into the Carrier domain; it reads MDTKQGVLDI…KIVAKVESLE (77 aa). Serine 35 is subject to O-(pantetheine 4'-phosphoryl)serine.

It belongs to the DltC family. In terms of processing, 4'-phosphopantetheine is transferred from CoA to a specific serine of apo-DCP.

It is found in the cytoplasm. The protein operates within cell wall biogenesis; lipoteichoic acid biosynthesis. Its function is as follows. Carrier protein involved in the D-alanylation of lipoteichoic acid (LTA). The loading of thioester-linked D-alanine onto DltC is catalyzed by D-alanine--D-alanyl carrier protein ligase DltA. The DltC-carried D-alanyl group is further transferred to cell membrane phosphatidylglycerol (PG) by forming an ester bond, probably catalyzed by DltD. D-alanylation of LTA plays an important role in modulating the properties of the cell wall in Gram-positive bacteria, influencing the net charge of the cell wall. The sequence is that of D-alanyl carrier protein from Lactobacillus acidophilus (strain ATCC 700396 / NCK56 / N2 / NCFM).